The sequence spans 1710 residues: Latrophilin Cirl (1710 aa).

Residues 1–767 (MLPTILSISY…LFTMFDGNMR (767 aa)) are Extracellular-facing. The region spanning 25–114 (ACEGKKLTIE…KYLEAHYQCI (90 aa)) is the SUEL-type lectin domain. Asn142 carries N-linked (GlcNAc...) asparagine glycosylation. Positions 183 to 304 (QHTAVTHSTP…SGSVVPGNGS (122 aa)) are disordered. Composition is skewed to polar residues over residues 185–198 (TAVT…STTA) and 256–265 (NATSPSNTRI). Asn256 carries N-linked (GlcNAc...) asparagine glycosylation. 2 stretches are compositionally biased toward low complexity: residues 275-285 (DDGTLLTTKSS) and 295-304 (SGSVVPGNGS). Residues Asn302 and Asn341 are each glycosylated (N-linked (GlcNAc...) asparagine). The interval 376 to 400 (YDEYDDDPSSTTPATSSADCLHNSS) is disordered. Residues 384–394 (SSTTPATSSAD) show a composition bias toward low complexity. Asn398, Asn655, Asn703, and Asn730 each carry an N-linked (GlcNAc...) asparagine glycan. The region spanning 561–754 (RSVVQKVKNI…AILMDVVDEH (194 aa)) is the GAIN-B domain. Disulfide bonds link Cys709/Cys736 and Cys724/Cys738. The tract at residues 709–754 (CVFWNYIDHAWSANGCSLESTNRTHSVCSCNHLTNFAILMDVVDEH) is GPS. The chain crosses the membrane as a helical span at residues 768–788 (IFIYISIGICVVFIVIALLTL). Topologically, residues 789-801 (KLFNGVFVKSART) are cytoplasmic. The chain crosses the membrane as a helical span at residues 802–822 (SIYTSIYLCLLAIELLFLLGI). Residues 823 to 828 (EQTETS) are Extracellular-facing. A helical transmembrane segment spans residues 829–849 (IFCGFITIFLHCAILSGTAWF). Over 850 to 875 (CYEAFHSYSTLTSDELLLEVDQTPKV) the chain is Cytoplasmic. The chain crosses the membrane as a helical span at residues 876-896 (NCYYLLSYGLSLSVVAISLVI). The Extracellular segment spans residues 897 to 920 (DPSTYTQNDYCVLMEANALFYATF). Residues 921 to 941 (VMPVLVFFVAAIGYTFLSWII) form a helical membrane-spanning segment. Over 942–968 (MCRKSRTGLKTKEHTRLASVRFDIRCS) the chain is Cytoplasmic. Residues 969–989 (FVFLLLLSAVWCSAYFYLRGA) traverse the membrane as a helical segment. Residues 990–999 (KMDDDTADVY) are Extracellular-facing. The helical transmembrane segment at 1000 to 1020 (GYCFICFNTLLGLYIFVFHCI) threads the bilayer. The Cytoplasmic portion of the chain corresponds to 1021–1710 (QNEKIRREYR…VRCYLEPLAK (690 aa)). Phosphoserine occurs at positions 1156, 1253, 1260, 1329, and 1330. Positions 1234–1259 (KPNSGQHGKKKRGAGGVPASPSGSLH) are disordered. 2 disordered regions span residues 1452-1540 (GGGS…SDER) and 1568-1690 (DYGA…QQRH). Residues 1458 to 1483 (GGSVSSRSQQQQLKKQQQQQSLAQQR) show a composition bias toward low complexity. 2 stretches are compositionally biased toward acidic residues: residues 1491–1505 (DDDD…EEAT) and 1515–1528 (CDED…DLED). Positions 1638–1650 (QTPAQKRQQLQKL) are enriched in polar residues. Residues 1651 to 1672 (SPQSTTSSSSHTSHSNPNPHPH) are compositionally biased toward low complexity. Positions 1673 to 1689 (QLTHPHPHQHPPHHQQR) are enriched in basic residues.

The protein belongs to the G-protein coupled receptor 2 family. LN-TM7 subfamily. In terms of assembly, forms a heterodimer, consisting of a large extracellular region non-covalently linked to a seven-transmembrane moiety. In terms of processing, proteolytically cleaved into 2 subunits, an extracellular subunit and a seven-transmembrane subunit.

The protein localises to the cell membrane. In Drosophila erecta (Fruit fly), this protein is Latrophilin Cirl.